The sequence spans 327 residues: Xylosidase/arabinosidase 43A (327 aa).

The active-site Proton acceptor is Asp-12. Glu-228 (proton donor) is an active-site residue.

The protein belongs to the glycosyl hydrolase 43 family.

The protein resides in the secreted. The enzyme catalyses Hydrolysis of (1-&gt;4)-beta-D-xylans, to remove successive D-xylose residues from the non-reducing termini.. The catalysed reaction is Hydrolysis of terminal non-reducing alpha-L-arabinofuranoside residues in alpha-L-arabinosides.. Activity is inhibited by Ag(+), Li(+), Pb(2+), Cu(2+), Cr(3+), Co(3+), Fe(3+), Ni(2+), Mg(2+), Zn(2+), EDTA and SDS; but not by Mn(2+), Ca(2+) and beta-mercaptoethanol. Its function is as follows. Bifunctional beta-xylosidase/alpha-L-arabinosidases with a low level of xylanase activity. Is most active on 4-nitrophenyl beta-D-xylopyranoside (pNPX) (defined as 100%), moderate on p-nitrophenyl-alpha-L-arabinofuranoside (pNPA) (23.7%), and weak on beechwood xylan (15.9%) and birchwood xylan (15.2%). Is able to attack xylooligosacchardies with degrees of polymerisation of 2-5, releasing the amounts of reducing sugars in the order of xylopentose &gt; xylotetraose &gt; xylotriose &gt; xylobiose, i.e. the rate of xylose released from xylooligosacchardies increased with the chain length. No activity is detected in the presence of carboxymethyl cellulose-sodium (CMC-Na), sugar beet arabinan, AZCL-arabinan (debranched), 4-nitrophenyl a-D - galactopyranoside, 2-nitrophenyl beta-D-galactopyranoside, and 4-nitrophenyl alpha-D-glucopyranoside. The sequence is that of Xylosidase/arabinosidase 43A from Humicola insolens (Soft-rot fungus).